The following is a 197-amino-acid chain: Protein SPMIP2 (197 aa).

The tract at residues 161 to 197 (SKAALPIGSRPPKLPKLPKKEEKSKFRPLHQHDARCY) is disordered. Residues 178 to 197 (PKKEEKSKFRPLHQHDARCY) are compositionally biased toward basic and acidic residues.

The protein is Protein SPMIP2 (SPMIP2) of Bos taurus (Bovine).